The chain runs to 315 residues: Probable cell division protein WhiA (315 aa).

The H-T-H motif DNA-binding region spans 275–309 (NLKELGEMVPSGVVSKSGINHRLRKINEIADKIRE).

The protein belongs to the WhiA family.

Involved in cell division and chromosome segregation. This chain is Probable cell division protein WhiA, found in Brevibacillus brevis (strain 47 / JCM 6285 / NBRC 100599).